Here is an 858-residue protein sequence, read N- to C-terminus: Bifunctional uridylyltransferase/uridylyl-removing enzyme (858 aa).

The interval 1–318 (MNPTDLHPIK…FPRPESDARA (318 aa)) is uridylyltransferase. A uridylyl-removing region spans residues 319–674 (IDEEFRSLHG…VRPTEEGSGL (356 aa)). An HD domain is found at 437 to 559 (VDQHTLAVIR…VKDERHLNAL (123 aa)). ACT domains are found at residues 675–756 (QIMV…LADV) and 789–858 (RLSV…LAGE).

Belongs to the GlnD family. It depends on Mg(2+) as a cofactor.

The enzyme catalyses [protein-PII]-L-tyrosine + UTP = [protein-PII]-uridylyl-L-tyrosine + diphosphate. The catalysed reaction is [protein-PII]-uridylyl-L-tyrosine + H2O = [protein-PII]-L-tyrosine + UMP + H(+). Its activity is regulated as follows. Uridylyltransferase (UTase) activity is inhibited by glutamine, while glutamine activates uridylyl-removing (UR) activity. Modifies, by uridylylation and deuridylylation, the PII regulatory proteins (GlnB and homologs), in response to the nitrogen status of the cell that GlnD senses through the glutamine level. Under low glutamine levels, catalyzes the conversion of the PII proteins and UTP to PII-UMP and PPi, while under higher glutamine levels, GlnD hydrolyzes PII-UMP to PII and UMP (deuridylylation). Thus, controls uridylylation state and activity of the PII proteins, and plays an important role in the regulation of nitrogen assimilation and metabolism. The sequence is that of Bifunctional uridylyltransferase/uridylyl-removing enzyme from Bordetella avium (strain 197N).